The sequence spans 188 residues: PRA1 family protein 3 (188 aa).

Methionine 1 is subject to N-acetylmethionine. The Cytoplasmic portion of the chain corresponds to 1-35 (MEVQVAPLRSWEDFFPGSDRFGRPDFKDISKWNNR). The next 2 helical transmembrane spans lie at 36-56 (VVNN…AVVA) and 57-77 (IVGF…ILVF). Residues 78–93 (LGFVWVSHNKDILRRM) are Cytoplasmic-facing. Helical transmembrane passes span 94–114 (KKQY…FLIS) and 115–135 (YLGD…LMFI). The Cytoplasmic segment spans residues 136–188 (HASLRLRNIKNKLENKKEEIGLKKTPMGIILDALEQQEDNINKLASYIPKVKE). Residues 136–188 (HASLRLRNIKNKLENKKEEIGLKKTPMGIILDALEQQEDNINKLASYIPKVKE) form a targeting to endoplasmic reticulum membrane region.

Belongs to the PRA1 family. In terms of assembly, binds to prenylated RAB and Ras superfamily members.

The protein resides in the endoplasmic reticulum membrane. It is found in the cell membrane. Its subcellular location is the cytoplasm. It localises to the cytoskeleton. Functionally, regulates intracellular concentrations of taurine and glutamate. Negatively modulates SLC1A1/EAAC1 glutamate transport activity by decreasing its affinity for glutamate in a PKC activity-dependent manner. May be involved in membrane traffic. The sequence is that of PRA1 family protein 3 (ARL6IP5) from Gallus gallus (Chicken).